A 241-amino-acid chain; its full sequence is Aspartate/glutamate leucyltransferase (241 aa).

The protein belongs to the R-transferase family. Bpt subfamily.

The protein localises to the cytoplasm. It catalyses the reaction N-terminal L-glutamyl-[protein] + L-leucyl-tRNA(Leu) = N-terminal L-leucyl-L-glutamyl-[protein] + tRNA(Leu) + H(+). The catalysed reaction is N-terminal L-aspartyl-[protein] + L-leucyl-tRNA(Leu) = N-terminal L-leucyl-L-aspartyl-[protein] + tRNA(Leu) + H(+). Functionally, functions in the N-end rule pathway of protein degradation where it conjugates Leu from its aminoacyl-tRNA to the N-termini of proteins containing an N-terminal aspartate or glutamate. This Parvibaculum lavamentivorans (strain DS-1 / DSM 13023 / NCIMB 13966) protein is Aspartate/glutamate leucyltransferase.